A 423-amino-acid chain; its full sequence is Histidine--tRNA ligase (423 aa).

Belongs to the class-II aminoacyl-tRNA synthetase family. Homodimer.

It is found in the cytoplasm. It catalyses the reaction tRNA(His) + L-histidine + ATP = L-histidyl-tRNA(His) + AMP + diphosphate + H(+). This Pasteurella multocida (strain Pm70) protein is Histidine--tRNA ligase (hisS).